The sequence spans 424 residues: Dapdiamide A synthase (424 aa).

The ATP-grasp domain maps to 120–318 (QEQLALKGVA…QISKLAQAVL (199 aa)). 147 to 209 (AGHAHWPVVL…QEFLAGEEFV (63 aa)) contributes to the ATP binding site. Mg(2+)-binding residues include Glu275 and Glu287.

Mg(2+) serves as cofactor. Requires Mn(2+) as cofactor.

The enzyme catalyses 3-[[[(2R,3R)-3-carboxyoxiran-2-yl]carbonyl]amino]-L-alanine + L-valine + ATP = dapdiamide E + ADP + phosphate + H(+). It carries out the reaction N(3)-fumaramoyl-(S)-2,3-diaminopropanoate + L-valine + ATP = dapdiamide A + ADP + phosphate + H(+). It catalyses the reaction N(3)-fumaramoyl-(S)-2,3-diaminopropanoate + L-isoleucine + ATP = dapdiamide B + ADP + phosphate + H(+). The catalysed reaction is N(3)-fumaramoyl-(S)-2,3-diaminopropanoate + L-leucine + ATP = dapdiamide C + ADP + phosphate + H(+). The protein operates within antibiotic biosynthesis. Its function is as follows. Involved in dapdiamide antibiotics biosynthesis. Ligates N-beta-fumaramoyl-DAP and valine, isoleucine or leucine to form dapdiamides A, B or C, respectively. Also ligates N-beta-epoxysuccinamoyl-DAP and valine to form dapdiamide E. This Enterobacter agglomerans (Erwinia herbicola) protein is Dapdiamide A synthase.